The chain runs to 196 residues: UPF0301 protein BT_1078 (196 aa).

Belongs to the UPF0301 (AlgH) family.

This is UPF0301 protein BT_1078 from Bacteroides thetaiotaomicron (strain ATCC 29148 / DSM 2079 / JCM 5827 / CCUG 10774 / NCTC 10582 / VPI-5482 / E50).